The primary structure comprises 310 residues: Nucleotide-binding protein Mmc1_3333 (310 aa).

19 to 26 is a binding site for ATP; the sequence is GLSGAGKS.

It belongs to the RapZ-like family.

Functionally, displays ATPase and GTPase activities. The chain is Nucleotide-binding protein Mmc1_3333 from Magnetococcus marinus (strain ATCC BAA-1437 / JCM 17883 / MC-1).